The chain runs to 80 residues: Small ribosomal subunit protein bS16c (80 aa).

The protein belongs to the bacterial ribosomal protein bS16 family.

It localises to the plastid. The protein resides in the chloroplast. The protein is Small ribosomal subunit protein bS16c of Lotus japonicus (Lotus corniculatus var. japonicus).